Consider the following 156-residue polypeptide: Oleosin Zm-I (156 aa).

The disordered stretch occupies residues 1 to 30 (MADHHRGATGGGGGYGDLQRGGGMHGEAQQ). At A2 the chain carries N-acetylalanine. The segment at 2-42 (ADHHRGATGGGGGYGDLQRGGGMHGEAQQQQKQGAMMTALK) is polar. Residues 8 to 25 (ATGGGGGYGDLQRGGGMH) show a composition bias toward gly residues. The tract at residues 43–114 (AATAATFGGS…AALSVFSWMY (72 aa)) is hydrophobic. The next 2 membrane-spanning stretches (helical) occupy residues 51 to 71 (GSML…LTVA) and 95 to 115 (GFVT…WMYK).

Belongs to the oleosin family. The N-terminus is blocked.

The protein localises to the lipid droplet. The protein resides in the membrane. Its function is as follows. May have a structural role to stabilize the lipid body during desiccation of the seed by preventing coalescence of the oil. Probably interacts with both lipid and phospholipid moieties of lipid bodies. May also provide recognition signals for specific lipase anchorage in lipolysis during seedling growth. This is Oleosin Zm-I (OLE16) from Zea mays (Maize).